A 393-amino-acid polypeptide reads, in one-letter code: Dual-specificity RNA methyltransferase RlmN (393 aa).

The active-site Proton acceptor is the Glu114. Residues 120–359 (EGDRATLCVS…VIVRKTRGDD (240 aa)) form the Radical SAM core domain. Cys127 and Cys364 are oxidised to a cystine. 3 residues coordinate [4Fe-4S] cluster: Cys134, Cys138, and Cys141. S-adenosyl-L-methionine-binding positions include 188–189 (GE), Ser220, 242–244 (SLH), and Asn321. The S-methylcysteine intermediate role is filled by Cys364.

The protein belongs to the radical SAM superfamily. RlmN family. The cofactor is [4Fe-4S] cluster.

It is found in the cytoplasm. It carries out the reaction adenosine(2503) in 23S rRNA + 2 reduced [2Fe-2S]-[ferredoxin] + 2 S-adenosyl-L-methionine = 2-methyladenosine(2503) in 23S rRNA + 5'-deoxyadenosine + L-methionine + 2 oxidized [2Fe-2S]-[ferredoxin] + S-adenosyl-L-homocysteine. It catalyses the reaction adenosine(37) in tRNA + 2 reduced [2Fe-2S]-[ferredoxin] + 2 S-adenosyl-L-methionine = 2-methyladenosine(37) in tRNA + 5'-deoxyadenosine + L-methionine + 2 oxidized [2Fe-2S]-[ferredoxin] + S-adenosyl-L-homocysteine. Specifically methylates position 2 of adenine 2503 in 23S rRNA and position 2 of adenine 37 in tRNAs. m2A2503 modification seems to play a crucial role in the proofreading step occurring at the peptidyl transferase center and thus would serve to optimize ribosomal fidelity. This is Dual-specificity RNA methyltransferase RlmN from Haemophilus ducreyi (strain 35000HP / ATCC 700724).